We begin with the raw amino-acid sequence, 175 residues long: MSTIAKDQTQINDKIRAKELRLIGQDGEQIGVKSKREALEMAERVDLDLVVVAPNAKPPVARIMDYGKFKFEQQKKEKEMKKKQKIINVKEIRLSPTIEEHDFQTKLKNGRKFLTKGDKCKVSIRFRGRAITHKEIGQRVLEKYADECKDIATVEQKPKMDGRQMFIMLAPTAEK.

This sequence belongs to the IF-3 family. Monomer.

It is found in the cytoplasm. IF-3 binds to the 30S ribosomal subunit and shifts the equilibrium between 70S ribosomes and their 50S and 30S subunits in favor of the free subunits, thus enhancing the availability of 30S subunits on which protein synthesis initiation begins. The chain is Translation initiation factor IF-3 from Staphylococcus aureus (strain USA300).